The chain runs to 88 residues: Small ribosomal subunit protein uS15 (88 aa).

The protein belongs to the universal ribosomal protein uS15 family. Part of the 30S ribosomal subunit. Forms a bridge to the 50S subunit in the 70S ribosome, contacting the 23S rRNA.

Functionally, one of the primary rRNA binding proteins, it binds directly to 16S rRNA where it helps nucleate assembly of the platform of the 30S subunit by binding and bridging several RNA helices of the 16S rRNA. Forms an intersubunit bridge (bridge B4) with the 23S rRNA of the 50S subunit in the ribosome. In Leptospira interrogans serogroup Icterohaemorrhagiae serovar copenhageni (strain Fiocruz L1-130), this protein is Small ribosomal subunit protein uS15.